We begin with the raw amino-acid sequence, 361 residues long: Uroporphyrinogen decarboxylase (361 aa).

Residues 27 to 31 (RQAGR), Asp-77, Tyr-154, Thr-209, and His-327 each bind substrate.

Belongs to the uroporphyrinogen decarboxylase family. In terms of assembly, homodimer.

It localises to the cytoplasm. It carries out the reaction uroporphyrinogen III + 4 H(+) = coproporphyrinogen III + 4 CO2. It functions in the pathway porphyrin-containing compound metabolism; protoporphyrin-IX biosynthesis; coproporphyrinogen-III from 5-aminolevulinate: step 4/4. Catalyzes the decarboxylation of four acetate groups of uroporphyrinogen-III to yield coproporphyrinogen-III. The sequence is that of Uroporphyrinogen decarboxylase from Coxiella burnetii (strain Dugway 5J108-111).